A 2524-amino-acid chain; its full sequence is Neurogenic locus notch homolog protein 1 (2524 aa).

The first 19 residues, 1–19 (MDRIGLAVLLCSLPVLTQG), serve as a signal peptide directing secretion. 4 EGF-like domains span residues 20–57 (LRCT…ERCQ), 58–99 (FPNP…KVCL), 102–140 (VDNA…DSCQ), and 141–177 (QADP…ATCK). At 20–1729 (LRCTQTAEMC…METPKPSTLY (1710 aa)) the chain is on the extracellular side. 33 disulfides stabilise this stretch: Cys22/Cys35, Cys29/Cys45, Cys47/Cys56, Cys62/Cys74, Cys68/Cys87, Cys89/Cys98, Cys106/Cys117, Cys111/Cys128, Cys130/Cys139, Cys145/Cys156, Cys150/Cys165, Cys167/Cys176, Cys183/Cys194, Cys188/Cys203, Cys205/Cys214, Cys221/Cys232, Cys226/Cys242, Cys244/Cys253, Cys260/Cys271, Cys265/Cys280, Cys282/Cys291, Cys298/Cys311, Cys305/Cys320, Cys322/Cys331, Cys338/Cys349, Cys343/Cys358, Cys360/Cys369, Cys375/Cys386, Cys380/Cys397, Cys399/Cys408, Cys415/Cys428, Cys422/Cys437, and Cys439/Cys448. The EGF-like 5; calcium-binding domain maps to 179–215 (DINECSQNPCKNGGQCINEFGSYRCTCQNRFTGRNCD). Residues 217–254 (PYVPCNPSPCLNGGTCRQTDDTSYDCTCLPGFSGQNCE) enclose the EGF-like 6 domain. The O-linked (Fuc...) threonine; alternate glycan is linked to Thr231. A glycan (O-linked (GalNAc...) threonine; alternate) is linked at Thr231. The EGF-like 7; calcium-binding domain maps to 256–292 (NIDDCPSNNCRNGGTCVDGVNTYNCQCPPDWTGQYCT). The region spanning 294–332 (DVDECQLMPNACQNGGTCHNTYGGYNCVCVNGWTGEDCS) is the EGF-like 8; calcium-binding domain. The 37-residue stretch at 334-370 (NIDDCANAACHSGATCHDRVASFYCECPHGRTGLLCH) folds into the EGF-like 9; calcium-binding domain. The EGF-like 10 domain occupies 371 to 409 (LDNACISNPCNEGSNCDTNPVNGKAICTCPPGYTGPACN). The EGF-like 11; calcium-binding domain occupies 411 to 449 (DVDECSLGANPCEHGGRCTNTLGSFQCNCPQGYAGPRCE). Residues Thr431 and Ser434 each coordinate Ca(2+). Ser434 carries an O-linked (Glc...) serine glycan. Positions 451, 452, and 454 each coordinate Ca(2+). Residues 451 to 487 (DVNECLSNPCQNDSTCLDQIGEFQCICMPGYEGLYCE) form the EGF-like 12; calcium-binding domain. Intrachain disulfides connect Cys455/Cys466, Cys460/Cys475, and Cys477/Cys486. The O-linked (Glc...) serine glycan is linked to Ser457. Asn462 carries N-linked (GlcNAc...) asparagine glycosylation. An O-linked (Fuc...) threonine glycan is attached at Thr465. Residues Asp468 and Gln469 each coordinate Ca(2+). The Ca(2+) site is built by Asn489, Ile490, and Glu492. The EGF-like 13; calcium-binding domain maps to 489 to 525 (NIDECASNPCLHNGKCIDKINEFRCDCPTGFSGNLCQ). Intrachain disulfides connect Cys493/Cys504, Cys498/Cys513, Cys515/Cys524, Cys531/Cys542, Cys536/Cys551, Cys553/Cys562, Cys569/Cys579, Cys574/Cys588, Cys590/Cys599, Cys606/Cys617, Cys611/Cys626, Cys628/Cys637, Cys644/Cys654, Cys649/Cys663, Cys665/Cys674, Cys681/Cys692, Cys686/Cys701, Cys703/Cys712, Cys719/Cys729, Cys724/Cys738, Cys740/Cys749, Cys756/Cys767, Cys761/Cys776, Cys778/Cys787, Cys794/Cys805, Cys799/Cys814, Cys816/Cys825, Cys832/Cys843, Cys837/Cys854, Cys856/Cys865, Cys872/Cys883, Cys877/Cys892, Cys894/Cys903, Cys910/Cys921, Cys915/Cys930, Cys932/Cys941, Cys948/Cys959, Cys953/Cys968, Cys970/Cys979, Cys986/Cys997, Cys991/Cys1006, Cys1008/Cys1017, Cys1024/Cys1035, Cys1029/Cys1044, Cys1046/Cys1055, Cys1062/Cys1073, Cys1067/Cys1082, Cys1084/Cys1093, Cys1100/Cys1121, Cys1115/Cys1130, Cys1132/Cys1141, Cys1148/Cys1159, Cys1153/Cys1168, Cys1170/Cys1179, Cys1186/Cys1197, Cys1191/Cys1206, Cys1208/Cys1217, Cys1224/Cys1243, Cys1237/Cys1252, Cys1254/Cys1263, Cys1270/Cys1283, Cys1275/Cys1292, Cys1294/Cys1303, Cys1310/Cys1321, Cys1315/Cys1333, Cys1335/Cys1344, Cys1351/Cys1362, Cys1356/Cys1371, Cys1373/Cys1382, Cys1390/Cys1401, Cys1395/Cys1412, Cys1414/Cys1423, Cys1447/Cys1470, Cys1452/Cys1465, and Cys1461/Cys1477. Ser495 carries O-linked (Glc...) serine glycosylation. The Ca(2+) site is built by Asp506 and Lys507. Residues 527 to 563 (DFDECTSTPCKNGAKCLDGPNSYTCQCTEGFTGRHCE) form the EGF-like 14; calcium-binding domain. An EGF-like 15; calcium-binding domain is found at 565 to 600 (DINECIPDPCHYGTCKDGIATFTCLCRPGYTGRLCD). An EGF-like 16; calcium-binding domain is found at 602–638 (DINECLSKPCLNGGQCTDRENGYICTCPKGTTGVNCE). In terms of domain architecture, EGF-like 17 spans 640–675 (KIDDCASNLCDNGKCIDKIDGYECTCEPGYTGKLCN). The EGF-like 18; calcium-binding domain occupies 677–713 (NINECDSNPCRNGGTCKDQINGFTCVCPDGYHDHMCL). An EGF-like 19; calcium-binding domain is found at 715 to 750 (EVNECNSNPCIHGACHDGVNGYKCDCEAGWSGSNCD). An EGF-like 20; calcium-binding domain is found at 752-788 (NNNECESNPCMNGGTCKDMTGAYICTCKAGFSGPNCQ). The region spanning 790 to 826 (NINECSSNPCLNHGTCIDDVAGYKCNCMLPYTGAICE) is the EGF-like 21; calcium-binding domain. The 39-residue stretch at 828–866 (VLAPCAGSPCKNGGRCKESEDFETFSCECPPGWQGQTCE) folds into the EGF-like 22 domain. The 37-residue stretch at 868–904 (DMNECVNRPCRNGATCQNTNGSYKCNCKPGYTGRNCE) folds into the EGF-like 23; calcium-binding domain. A glycan (N-linked (GlcNAc...) asparagine) is linked at Asn887. One can recognise an EGF-like 24; calcium-binding domain in the interval 906–942 (DIDDCQPNPCHNGGSCSDGINMFFCNCPAGFRGPKCE). In terms of domain architecture, EGF-like 25; calcium-binding spans 944-980 (DINECASNPCKNGANCTDCVNSYTCTCQPGFSGIHCE). Asn958 carries an N-linked (GlcNAc...) asparagine glycan. The EGF-like 26 domain maps to 982–1018 (NTPDCTESSCFNGGTCIDGINTFTCQCPPGFTGSYCQ). The EGF-like 27; calcium-binding domain maps to 1020–1056 (DINECDSKPCLNGGTCQDSYGTYKCTCPQGYTGLNCQ). EGF-like domains follow at residues 1058–1094 (LVRW…VYCD) and 1096–1142 (PSVS…SYCE). Residues 1144–1180 (QVDECSPNPCQNGATCTDYLGGYSCECVAGYHGVNCS) enclose the EGF-like 30; calcium-binding domain. N-linked (GlcNAc...) asparagine glycosylation is present at Asn1178. An EGF-like 31; calcium-binding domain is found at 1182–1218 (EINECLSHPCQNGGTCIDLINTYKCSCPRGTQGVHCE). In terms of domain architecture, EGF-like 32; calcium-binding spans 1220-1264 (NVDDCTPFYDSFTLEPKCFNNGKCIDRVGGYNCICPPGFVGERCE). EGF-like domains follow at residues 1266-1304 (DVNE…RRCE), 1306-1346 (VVDG…TCEY), 1347-1383 (DSRT…ATCQ), and 1386-1424 (VISP…LFCH). O-linked (Fuc...) threonine; alternate glycosylation is present at Thr1400. Thr1400 carries an O-linked (GalNAc...) threonine; alternate glycan. 3 LNR repeats span residues 1447-1487 (CENE…PWKN), 1488-1529 (CTQS…CNPL), and 1530-1564 (YDQY…NMPE). The N-linked (GlcNAc...) asparagine glycan is linked to Asn1487. Intrachain disulfides connect Cys1488–Cys1512, Cys1494–Cys1507, Cys1503–Cys1519, Cys1534–Cys1547, and Cys1543–Cys1559. A glycan (N-linked (GlcNAc...) asparagine) is linked at Asn1508. N-linked (GlcNAc...) asparagine glycosylation occurs at Asn1584. The chain crosses the membrane as a helical span at residues 1730–1750 (PMLSMLVIPLLIIFVFMMVIV). Over 1751-2524 (NKKRRREHGQ…QRTHIPEAFK (774 aa)) the chain is Cytoplasmic. ANK repeat units lie at residues 1876-1919 (DGFT…QLHN), 1924-1953 (TGET…DANV), 1957-1987 (MGRT…DLDA), 1991-2020 (DGTT…DVNA), 2024-2053 (FGKS…NKDM), and 2057-2086 (KEET…NRDI). 3 disordered regions span residues 2144–2230 (NMKP…LNHL), 2369–2407 (MQAQ…FCSS), and 2451–2524 (LTPP…EAFK). Polar residues-rich tracts occupy residues 2180 to 2192 (GKTT…SSGV) and 2208 to 2230 (DVSS…LNHL). Positions 2369–2394 (MQAQQMQQQQNLQLHQSMQQQHHNSS) are enriched in low complexity. Composition is skewed to polar residues over residues 2395–2407 (TTST…FCSS) and 2451–2471 (LTPP…SHQL). Low complexity predominate over residues 2481-2496 (PSPESPDQWSSSSPHS). Polar residues predominate over residues 2497–2516 (NMSDWSEGISSPPTSMQPQR).

This sequence belongs to the NOTCH family. As to quaternary structure, forms a ternary complex with nrarp and rbpj/suh. Post-translationally, O-glycosylated on the EGF-like domains. Contains both O-linked fucose and O-linked glucose. O-linked glycosylation by galnt11 is involved in determination of left/right symmetry: glycosylation promotes activation of notch1, possibly by promoting cleavage by adam17, modulating the balance between motile and immotile (sensory) cilia at the left-right organiser (LRO). Synthesized in the endoplasmic reticulum as an inactive form which is proteolytically cleaved by a furin-like convertase in the trans-Golgi network before it reaches the plasma membrane to yield an active, ligand-accessible form. Cleavage results in a C-terminal fragment N(TM) and a N-terminal fragment N(EC). Following ligand binding, it is cleaved by adam17 to yield a membrane-associated intermediate fragment called notch extracellular truncation (NEXT). Following endocytosis, this fragment is then cleaved by presenilin dependent gamma-secretase to release a Notch-derived peptide containing the intracellular domain (NICD) from the membrane.

It is found in the cell membrane. Its subcellular location is the nucleus. Functionally, functions as a receptor for membrane-bound ligands Jagged-1 (JAG1), Jagged-2 (JAG2) and Delta-1 (DLL1) to regulate cell-fate determination. Upon ligand activation through the released notch intracellular domain (NICD) it forms a transcriptional activator complex with RBPJ/RBPSUH and activates genes of the enhancer of split locus. Affects the implementation of differentiation, proliferation and apoptotic programs. Involved in angiogenesis; negatively regulates endothelial cell proliferation and migration and angiogenic sprouting. Involved in the maturation of both CD4(+) and CD8(+) cells in the thymus. Important for follicular differentiation and possibly cell fate selection within the follicle. During cerebellar development, functions as a receptor for neuronal DNER and is involved in the differentiation of Bergmann glia. Represses neuronal and myogenic differentiation. May play an essential role in postimplantation development, probably in some aspect of cell specification and/or differentiation. May be involved in mesoderm development, somite formation and neurogenesis. Involved in determination of left/right symmetry by modulating the balance between motile and immotile (sensory) cilia at the left-right organiser (LRO). This Xenopus laevis (African clawed frog) protein is Neurogenic locus notch homolog protein 1 (notch1).